Reading from the N-terminus, the 381-residue chain is Probable serine/threonine-protein kinase PBL22 (381 aa).

Cys3 carries the S-palmitoyl cysteine lipid modification. Position 64 is a phosphothreonine (Thr64). Residues 75–351 (FREGNIIGKG…GDVVVAFEYI (277 aa)) enclose the Protein kinase domain. ATP contacts are provided by residues 81–89 (IGKGGFGSV) and Lys103. Tyr148 bears the Phosphotyrosine mark. Catalysis depends on Asp201, which acts as the Proton acceptor. Residue Ser235 is modified to Phosphoserine. Phosphothreonine is present on residues Thr236 and Thr241. The residue at position 249 (Tyr249) is a Phosphotyrosine. A disordered region spans residues 361–381 (RRTARKSTDSNRLRRETKQSY).

Belongs to the protein kinase superfamily. Ser/Thr protein kinase family. Post-translationally, palmitoylation at Cys-3 and Cys-6 are required for plasma membrane location.

It localises to the cell membrane. It carries out the reaction L-seryl-[protein] + ATP = O-phospho-L-seryl-[protein] + ADP + H(+). The catalysed reaction is L-threonyl-[protein] + ATP = O-phospho-L-threonyl-[protein] + ADP + H(+). In terms of biological role, may be involved in plant defense signaling. The protein is Probable serine/threonine-protein kinase PBL22 of Arabidopsis thaliana (Mouse-ear cress).